A 487-amino-acid polypeptide reads, in one-letter code: GTPase Der (487 aa).

EngA-type G domains lie at 3–166 (PVIA…PRDA) and 193–366 (IKIA…KSAV). GTP-binding positions include 9–16 (GRPNVGKS), 56–60 (DTGGI), 118–121 (NKID), 199–206 (GRPNVGKS), 246–250 (DTAGV), and 311–314 (NKWD). Positions 367-451 (TRWPTSRLTQ…PIRIEYKGGE (85 aa)) constitute a KH-like domain. Over residues 449–461 (GGENPFEGKKNTL) the composition is skewed to basic and acidic residues. The segment at 449–487 (GGENPFEGKKNTLTDRQVNKKRRLMSHHKKAEKKRRDKR) is disordered. Over residues 467-487 (NKKRRLMSHHKKAEKKRRDKR) the composition is skewed to basic residues.

Belongs to the TRAFAC class TrmE-Era-EngA-EngB-Septin-like GTPase superfamily. EngA (Der) GTPase family. Associates with the 50S ribosomal subunit.

Functionally, GTPase that plays an essential role in the late steps of ribosome biogenesis. In Pseudomonas putida (strain GB-1), this protein is GTPase Der.